The sequence spans 486 residues: Shutoff alkaline exonuclease (486 aa).

Belongs to the herpesviridae alkaline nuclease family. Forms a complex with the DNA polymerase, the DNA polymerase processivity factor, and the major DNA binding protein.

It localises to the host nucleus. It is found in the host cytoplasm. Its function is as follows. Plays a role in processing non linear or branched viral DNA intermediates in order to promote the production of mature packaged unit-length linear progeny viral DNA molecules. Exhibits endonuclease and exonuclease activities and accepts both double-stranded and single-stranded DNA as substrate. Exonuclease digestion of DNA is in the 5'-&gt; 3' direction and the products are 5'-monophosphate nucleosides. Additionally, forms a recombinase with the major DNA-binding protein, which displays strand exchange activity. Also acts as a cytoplasmic RNA endonuclease that induces degradation of the majority of the cellular messenger RNAs during early lytic infection. The resulting inhibition of cellular protein synthesis serves to ensure maximal viral gene expression and evasion from host immune response. Internally cleaves host mRNAs which are then degraded by the cellular exonuclease XRN1. Bypasses therefore the regulatory steps of deadenylation and decapping normally required for XRN1 activation. In addition, inhibits host inflammasome activation to promote viral lytic replication by interacting with host AIM2 and disrupting its polymerization. The protein is Shutoff alkaline exonuclease (ORF37) of Human herpesvirus 8 type P (isolate GK18) (HHV-8).